A 567-amino-acid polypeptide reads, in one-letter code: Microtubule-associated protein 70-1 (567 aa).

Residues 38-341 are a coiled coil; sequence VRVELTRLEN…AARSEAQLKD (304 aa). Residues 220–440 are required for targeting to microtubules; that stretch reads ILDRMHRQKV…SGMNVSTDSS (221 aa). Disordered regions lie at residues 425 to 457 and 534 to 567; these read KGHV…EFTS and LEKE…ARNM. Basic and acidic residues predominate over residues 440-453; it reads SEDKESNNSDEKAN. The stretch at 516-545 forms a coiled coil; that stretch reads KKRRMEVAAMEKEMAALRLEKEQDNKAKRF.

Belongs to the MAP70 family.

The protein resides in the cytoplasm. It localises to the cytoskeleton. Functionally, plant-specific protein that interact with microtubules. The polypeptide is Microtubule-associated protein 70-1 (MAP70.1) (Oryza sativa subsp. japonica (Rice)).